A 407-amino-acid chain; its full sequence is Peptidase T (407 aa).

His-78 provides a ligand contact to Zn(2+). The active site involves Asp-80. Residue Asp-141 coordinates Zn(2+). Glu-175 acts as the Proton acceptor in catalysis. Residues Glu-176, Asp-198, and His-380 each contribute to the Zn(2+) site.

The protein belongs to the peptidase M20B family. Zn(2+) serves as cofactor.

The protein resides in the cytoplasm. The catalysed reaction is Release of the N-terminal residue from a tripeptide.. Functionally, cleaves the N-terminal amino acid of tripeptides. This is Peptidase T from Clostridium novyi (strain NT).